Here is a 237-residue protein sequence, read N- to C-terminus: E3 ubiquitin-protein ligase RNF166 (237 aa).

The RING-type zinc-finger motif lies at 33–73; that stretch reads CPICLEVYHRPVAIGSCGHTFCGECLQPCLQVPSPLCPLCR. Cysteine 98, cysteine 101, histidine 113, and cysteine 117 together coordinate Zn(2+). The segment at 98 to 117 adopts a C2HC RNF-type zinc-finger fold; that stretch reads CRGCNKKVTLAKMRVHISSC. One can recognise a UIM domain in the interval 221–237; it reads DEEAAFQAALALSLSEN.

It is found in the cytoplasm. The catalysed reaction is S-ubiquitinyl-[E2 ubiquitin-conjugating enzyme]-L-cysteine + [acceptor protein]-L-lysine = [E2 ubiquitin-conjugating enzyme]-L-cysteine + N(6)-ubiquitinyl-[acceptor protein]-L-lysine.. Its pathway is protein modification; protein ubiquitination. Its function is as follows. E3 ubiquitin-protein ligase that promotes the ubiquitination of different substrates. In turn, participates in different biological processes including interferon production or autophagy. Plays a role in the activation of RNA virus-induced interferon-beta production by promoting the ubiquitination of TRAF3 and TRAF6. Also plays a role in the early recruitment of autophagy adapters to bacteria. Mediates 'Lys-29' and 'Lys-33'-linked ubiquitination of SQSTM1 leading to xenophagic targeting of bacteria and inhibition of their replication. The protein is E3 ubiquitin-protein ligase RNF166 (RNF166) of Homo sapiens (Human).